Reading from the N-terminus, the 74-residue chain is High-potential iron-sulfur protein isozyme 2 (74 aa).

[4Fe-4S] cluster is bound by residues C36, C39, C53, and C67.

In terms of assembly, homodimer.

In terms of biological role, specific class of high-redox-potential 4Fe-4S ferredoxins. Functions in anaerobic electron transport in most purple and in some other photosynthetic bacteria and in at least one genus (Paracoccus) of halophilic, denitrifying bacteria. In Ectothiorhodospira mobilis, this protein is High-potential iron-sulfur protein isozyme 2.